Consider the following 468-residue polypeptide: RuvB-like helicase 2 (468 aa).

Residue 76 to 83 participates in ATP binding; it reads GPPSTGKT.

This sequence belongs to the RuvB family. May form heterododecamers with RVB1. Component of the SWR1 chromatin remodeling complex, the INO80 chromatin remodeling complex, and of the R2TP complex.

It is found in the nucleus. It catalyses the reaction ATP + H2O = ADP + phosphate + H(+). Functionally, DNA helicase which participates in several chromatin remodeling complexes, including the SWR1 and the INO80 complexes. The SWR1 complex mediates the ATP-dependent exchange of histone H2A for the H2A variant HZT1 leading to transcriptional regulation of selected genes by chromatin remodeling. The INO80 complex remodels chromatin by shifting nucleosomes and is involved in DNA repair. Also involved in pre-rRNA processing. This is RuvB-like helicase 2 (rvb2) from Emericella nidulans (strain FGSC A4 / ATCC 38163 / CBS 112.46 / NRRL 194 / M139) (Aspergillus nidulans).